The chain runs to 156 residues: S-ribosylhomocysteine lyase (156 aa).

His-53, His-57, and Cys-122 together coordinate Fe cation.

The protein belongs to the LuxS family. As to quaternary structure, homodimer. It depends on Fe cation as a cofactor.

It carries out the reaction S-(5-deoxy-D-ribos-5-yl)-L-homocysteine = (S)-4,5-dihydroxypentane-2,3-dione + L-homocysteine. In terms of biological role, involved in the synthesis of autoinducer 2 (AI-2) which is secreted by bacteria and is used to communicate both the cell density and the metabolic potential of the environment. The regulation of gene expression in response to changes in cell density is called quorum sensing. Catalyzes the transformation of S-ribosylhomocysteine (RHC) to homocysteine (HC) and 4,5-dihydroxy-2,3-pentadione (DPD). This Finegoldia magna (strain ATCC 29328 / DSM 20472 / WAL 2508) (Peptostreptococcus magnus) protein is S-ribosylhomocysteine lyase.